A 326-amino-acid polypeptide reads, in one-letter code: Homeobox protein Hox-A1 (326 aa).

Residues 196–201 carry the Antp-type hexapeptide motif; it reads TFDWMK. Residues 221 to 280 constitute a DNA-binding region (homeobox); the sequence is PNTVRTNFTTKQLTELEKEFHFNKYLTRARRVEIAAALQLNETQVKIWFQNRRMKQKKRE. A disordered region spans residues 273-326; the sequence is RMKQKKREKEGLTSASPATPGSEANTEDTSDKCNSTSSTPSPSSSTSETINTSG. Residues 285 to 296 show a composition bias toward polar residues; sequence TSASPATPGSEA. Low complexity predominate over residues 306 to 326; the sequence is NSTSSTPSPSSSTSETINTSG.

The protein belongs to the Antp homeobox family. Labial subfamily.

The protein resides in the nucleus. Its function is as follows. Sequence-specific transcription factor. Part of a developmental regulatory system that provides cells with specific positional identities on the anterior-posterior axis. Acts on the anterior body structures. Seems to act in the maintenance and/or generation of hindbrain segments. The chain is Homeobox protein Hox-A1 (HOXA1) from Heterodontus francisci (Horn shark).